We begin with the raw amino-acid sequence, 590 residues long: Protein NRT1/ PTR FAMILY 6.3 (590 aa).

Helical transmembrane passes span 46-66 and 77-97; these read LTTL…MHLG and FLGT…TFLG. Phosphothreonine; by CIPK23 is present on threonine 101. A run of 10 helical transmembrane segments spans residues 102 to 122, 143 to 163, 193 to 213, 219 to 239, 342 to 362, 374 to 394, 423 to 443, 460 to 480, 501 to 521, and 542 to 562; these read IAIF…STII, GIQL…TGGV, FFFC…YVQD, WGYG…LAGT, MLPI…LTTL, IGSF…GLLL, IGLG…VELK, LGFY…ALIY, GLLL…VTIV, and YNFY…FLVF. Histidine 356 and threonine 360 together coordinate substrate.

The protein belongs to the major facilitator superfamily. Proton-dependent oligopeptide transporter (POT/PTR) (TC 2.A.17) family. In terms of assembly, monomer and homodimer. The dimer has the 2 monomers in the same orientation. Interacts with CIPK23. Acts as a high-affinity nitrate transporter when phosphorylated and as a low-affinity transporter when dephosphorylated. Forms homodimer when unphosphorylated and monomer when phosphorylated. Low nitrogen concentration in the medium stimulates phosphorylation. Phosphorylation also regulates the nitrate signaling. In terms of tissue distribution, expressed in the stele in lateral root primordia before emergence and in the tip of primary and emerged lateral roots. Detected in emerging and immature leaves, guard cells, flower buds, style, stigma, anthers and pollen grains. Not detected in the shoot apical meristem.

The protein resides in the membrane. Functionally, dual affinity nitrate transporter. Involved in proton-dependent nitrate uptake and in the regulation of the nitrate transporter NRT2.1. Also acts as a nitrate sensor that trigger a specific signaling pathway stimulating lateral root growth and seed germination. The uptake activity is not required for sensor function. Displays an auxin transport facilitation inhibited by high nitrate concentration. Required to prevent auxin accumulation in preemerged lateral root primordia and young lateral roots when external nitrate concentration is low or null. May be involved in the basipetal transport of auxin out of the lateral root tips. Acts as a bidirectional transporter involved in root-to-shoot nitrate translocation. Recognizes specifically nitrate and chlorate, but not nitrite, alanine, sulfate, phosphate or the di-peptide Ala-Ala. The sequence is that of Protein NRT1/ PTR FAMILY 6.3 (NPF6.3) from Arabidopsis thaliana (Mouse-ear cress).